Here is a 283-residue protein sequence, read N- to C-terminus: Phosphatidylserine decarboxylase proenzyme (283 aa).

Active-site charge relay system; for autoendoproteolytic cleavage activity residues include Asp89, His146, and Ser249. The active-site Schiff-base intermediate with substrate; via pyruvic acid; for decarboxylase activity is Ser249. Pyruvic acid (Ser); by autocatalysis is present on Ser249.

This sequence belongs to the phosphatidylserine decarboxylase family. PSD-B subfamily. Prokaryotic type I sub-subfamily. Heterodimer of a large membrane-associated beta subunit and a small pyruvoyl-containing alpha subunit. It depends on pyruvate as a cofactor. Post-translationally, is synthesized initially as an inactive proenzyme. Formation of the active enzyme involves a self-maturation process in which the active site pyruvoyl group is generated from an internal serine residue via an autocatalytic post-translational modification. Two non-identical subunits are generated from the proenzyme in this reaction, and the pyruvate is formed at the N-terminus of the alpha chain, which is derived from the carboxyl end of the proenzyme. The autoendoproteolytic cleavage occurs by a canonical serine protease mechanism, in which the side chain hydroxyl group of the serine supplies its oxygen atom to form the C-terminus of the beta chain, while the remainder of the serine residue undergoes an oxidative deamination to produce ammonia and the pyruvoyl prosthetic group on the alpha chain. During this reaction, the Ser that is part of the protease active site of the proenzyme becomes the pyruvoyl prosthetic group, which constitutes an essential element of the active site of the mature decarboxylase.

Its subcellular location is the cell membrane. It catalyses the reaction a 1,2-diacyl-sn-glycero-3-phospho-L-serine + H(+) = a 1,2-diacyl-sn-glycero-3-phosphoethanolamine + CO2. Its pathway is phospholipid metabolism; phosphatidylethanolamine biosynthesis; phosphatidylethanolamine from CDP-diacylglycerol: step 2/2. In terms of biological role, catalyzes the formation of phosphatidylethanolamine (PtdEtn) from phosphatidylserine (PtdSer). The chain is Phosphatidylserine decarboxylase proenzyme from Legionella pneumophila (strain Lens).